The chain runs to 431 residues: Adenylosuccinate synthetase (431 aa).

GTP-binding positions include 12–18 (GDEGKGK) and 40–42 (GHT). Aspartate 13 serves as the catalytic Proton acceptor. Mg(2+) contacts are provided by aspartate 13 and glycine 40. IMP-binding positions include 13–16 (DEGK), 38–41 (NAGH), threonine 131, arginine 145, glutamine 225, threonine 240, and arginine 304. The active-site Proton donor is histidine 41. 300-306 (TVTGRKR) is a substrate binding site. GTP-binding positions include arginine 306, 332 to 334 (KLD), and 414 to 416 (STS).

The protein belongs to the adenylosuccinate synthetase family. In terms of assembly, homodimer. Mg(2+) is required as a cofactor.

The protein localises to the cytoplasm. It carries out the reaction IMP + L-aspartate + GTP = N(6)-(1,2-dicarboxyethyl)-AMP + GDP + phosphate + 2 H(+). The protein operates within purine metabolism; AMP biosynthesis via de novo pathway; AMP from IMP: step 1/2. Its function is as follows. Plays an important role in the de novo pathway of purine nucleotide biosynthesis. Catalyzes the first committed step in the biosynthesis of AMP from IMP. In Roseobacter denitrificans (strain ATCC 33942 / OCh 114) (Erythrobacter sp. (strain OCh 114)), this protein is Adenylosuccinate synthetase.